The following is a 317-amino-acid chain: Aquaporin-2 (317 aa).

Topologically, residues 1–75 are cytoplasmic; sequence MSLRDDLTIN…RSQEFKMQHR (75 aa). The helical transmembrane segment at 76 to 96 threads the bilayer; the sequence is EFLAEFIGTLILVLLTCGFCA. The Extracellular portion of the chain corresponds to 97–108; that stretch reads EQTLNIEKSKSW. A helical transmembrane segment spans residues 109–129; sequence LTSSLGSGLSVLIGICVAGHV. Residues 130 to 154 are Cytoplasmic-facing; the sequence is SGGHLNPAITIAFWVFSGFPIRKVP. The NPA 1 signature appears at 135–137; it reads NPA. Residues 155–175 form a helical membrane-spanning segment; the sequence is MYITAQLLGAFSGAALLYSIV. Over 176–208 the chain is Extracellular; the sequence is EPAISQFDHGKRQILGELGTAGIFGTYPPLYVG. Residues 209–229 traverse the membrane as a helical segment; sequence TGSAVASEVVGTAMLLLVVMV. The Cytoplasmic portion of the chain corresponds to 230–242; that stretch reads TGHPNNLPFRTAQ. A helical transmembrane segment spans residues 243-263; that stretch reads GAMIALGVTTISLCIGYTSGF. The Extracellular segment spans residues 264–295; the sequence is SLNPARDFGPRLFTAVAGWGIDVFTVHHYYAL. The NPA 2 motif lies at 266–268; it reads NPA. The helical transmembrane segment at 296–316 threads the bilayer; sequence VPMFAPILGGLAGGFIYTVFI. Asp317 is a topological domain (cytoplasmic).

It belongs to the MIP/aquaporin (TC 1.A.8) family.

Its subcellular location is the cell membrane. It catalyses the reaction H2O(in) = H2O(out). The catalysed reaction is glycerol(in) = glycerol(out). In terms of biological role, water channel required to facilitate the transport of water across membranes. Contributes to water uptake of spores during the early stages of spore germination. Aquaporins AQP1 and AQP2 act as extracellular pH sensors and enable the spores to hydrate under favorable conditions and to commence germination. Wounded vegetables and fruit present acidic pH, so the optimal pH range for germination is adapted to the relevant host pH. The protein is Aquaporin-2 of Rhizopus delemar (strain RA 99-880 / ATCC MYA-4621 / FGSC 9543 / NRRL 43880) (Mucormycosis agent).